The sequence spans 326 residues: Protein GVP36 (326 aa).

Ser2 carries the post-translational modification N-acetylserine. Position 2 is a phosphoserine (Ser2). Residues Lys13, Lys305, and Lys313 each participate in a glycyl lysine isopeptide (Lys-Gly) (interchain with G-Cter in ubiquitin) cross-link. Residues 299 to 326 (AEEPEAKPEVAEEEKPQTAISMNDEDDA) are disordered. A compositionally biased stretch (basic and acidic residues) spans 302-314 (PEAKPEVAEEEKP). Ser319 carries the phosphoserine modification.

The protein localises to the golgi apparatus membrane. The chain is Protein GVP36 (GVP36) from Saccharomyces cerevisiae (strain ATCC 204508 / S288c) (Baker's yeast).